The primary structure comprises 322 residues: Fructose-1,6-bisphosphatase class 1 3 (322 aa).

Mg(2+) is bound by residues Glu-84, Asp-103, Leu-105, and Asp-106. Residues Asp-106–Ser-109, Asn-198, and Lys-262 contribute to the substrate site. Glu-268 contacts Mg(2+).

It belongs to the FBPase class 1 family. As to quaternary structure, homotetramer. The cofactor is Mg(2+).

The protein localises to the cytoplasm. It carries out the reaction beta-D-fructose 1,6-bisphosphate + H2O = beta-D-fructose 6-phosphate + phosphate. It functions in the pathway carbohydrate biosynthesis; gluconeogenesis. This chain is Fructose-1,6-bisphosphatase class 1 3, found in Pseudoalteromonas translucida (strain TAC 125).